A 381-amino-acid polypeptide reads, in one-letter code: Queuine tRNA-ribosyltransferase (381 aa).

Aspartate 96 functions as the Proton acceptor in the catalytic mechanism. Residues 96 to 100 (DSGGF), aspartate 150, glutamine 193, and glycine 220 each bind substrate. An RNA binding region spans residues 251–257 (GVGSPDA). The active-site Nucleophile is the aspartate 270. The RNA binding; important for wobble base 34 recognition stretch occupies residues 275–279 (TRIAR). Residues cysteine 308, cysteine 310, cysteine 313, and histidine 339 each coordinate Zn(2+).

Belongs to the queuine tRNA-ribosyltransferase family. Homodimer. Within each dimer, one monomer is responsible for RNA recognition and catalysis, while the other monomer binds to the replacement base PreQ1. Requires Zn(2+) as cofactor.

It catalyses the reaction 7-aminomethyl-7-carbaguanine + guanosine(34) in tRNA = 7-aminomethyl-7-carbaguanosine(34) in tRNA + guanine. The protein operates within tRNA modification; tRNA-queuosine biosynthesis. Functionally, catalyzes the base-exchange of a guanine (G) residue with the queuine precursor 7-aminomethyl-7-deazaguanine (PreQ1) at position 34 (anticodon wobble position) in tRNAs with GU(N) anticodons (tRNA-Asp, -Asn, -His and -Tyr). Catalysis occurs through a double-displacement mechanism. The nucleophile active site attacks the C1' of nucleotide 34 to detach the guanine base from the RNA, forming a covalent enzyme-RNA intermediate. The proton acceptor active site deprotonates the incoming PreQ1, allowing a nucleophilic attack on the C1' of the ribose to form the product. After dissociation, two additional enzymatic reactions on the tRNA convert PreQ1 to queuine (Q), resulting in the hypermodified nucleoside queuosine (7-(((4,5-cis-dihydroxy-2-cyclopenten-1-yl)amino)methyl)-7-deazaguanosine). The chain is Queuine tRNA-ribosyltransferase from Bacillus subtilis (strain 168).